The primary structure comprises 660 residues: Polyadenylation factor subunit 2 (660 aa).

The segment covering 1-12 has biased composition (basic and acidic residues); that stretch reads MSYEPRGDHDKG. Residues 1-32 form a disordered region; the sequence is MSYEPRGDHDKGYGGGGGHDGLPPRNRGRRPV. 7 WD repeats span residues 94–133, 136–176, 177–216, 219–258, 261–301, 304–344, and 376–415; these read KIKH…FETI, AHDS…ESIR, GHTD…TDMT, GHGW…CLTT, GHKN…DIAL, GHEK…TAPD, and AHDF…EAPE. The segment at 562–660 is disordered; sequence KAGYQPPPPP…QSKGNYTRVR (99 aa). Residues 566 to 610 show a composition bias toward pro residues; the sequence is QPPPPPGSAGAPMPPPGILPPGLIPPPGAAGFPMPPPGFAPPPLI.

The protein resides in the nucleus. Required for 3'-end cleavage and polyadenylation of pre-mRNAs. Also involved in chromosome segregation where it has a role in chromosome attachment to the mitotic spindle. This Neurospora crassa (strain ATCC 24698 / 74-OR23-1A / CBS 708.71 / DSM 1257 / FGSC 987) protein is Polyadenylation factor subunit 2 (paa-1).